Reading from the N-terminus, the 247-residue chain is uncharacterized protein (247 aa).

An HTH merR-type domain is found at 11–85 (GMSIGAVLDL…LKVIRAQLDA (75 aa)). The H-T-H motif DNA-binding region spans 14-38 (IGAVLDLLRPDFPDVTISKIRFLEA).

Homodimer.

In terms of biological role, transcriptional regulator that binds to its own promoter and thus may play a role in the regulation of the cotranscribed genes Rv1827 and Rv1828. Can also bind several promoter regions of genes that are essential, including ftsZ. Binds to the imperfect everted repeat sequence CTCAA through its winged-HTH motif. This is an uncharacterized protein from Mycobacterium tuberculosis (strain ATCC 25618 / H37Rv).